The chain runs to 75 residues: uncharacterized protein (75 aa).

This is an uncharacterized protein from Dryophytes versicolor (chameleon treefrog).